Here is a 423-residue protein sequence, read N- to C-terminus: D-tagatose-1,6-bisphosphate aldolase subunit GatZ (423 aa).

This sequence belongs to the GatZ/KbaZ family. GatZ subfamily. Forms a complex with GatY.

It participates in carbohydrate metabolism; D-tagatose 6-phosphate degradation; D-glyceraldehyde 3-phosphate and glycerone phosphate from D-tagatose 6-phosphate: step 2/2. Functionally, component of the tagatose-1,6-bisphosphate aldolase GatYZ that is required for full activity and stability of the Y subunit. Could have a chaperone-like function for the proper and stable folding of GatY. When expressed alone, GatZ does not show any aldolase activity. Is involved in the catabolism of galactitol. In Salmonella agona (strain SL483), this protein is D-tagatose-1,6-bisphosphate aldolase subunit GatZ.